The sequence spans 81 residues: EC protein III (81 aa).

It belongs to the metallothionein superfamily. Type 15 family.

Functionally, binds 5 molecules of zinc. May have a role in Zn(2+) homeostasis during embryogenesis. This Triticum aestivum (Wheat) protein is EC protein III.